Consider the following 395-residue polypeptide: Tyrosine--tRNA ligase 2 (395 aa).

The 'HIGH' region signature appears at proline 42–histidine 51. A 'KMSKS' region motif is present at residues lysine 226–serine 230. Position 229 (lysine 229) interacts with ATP. One can recognise an S4 RNA-binding domain in the interval threonine 334 to alanine 395.

This sequence belongs to the class-I aminoacyl-tRNA synthetase family. TyrS type 2 subfamily. In terms of assembly, homodimer.

Its subcellular location is the cytoplasm. It carries out the reaction tRNA(Tyr) + L-tyrosine + ATP = L-tyrosyl-tRNA(Tyr) + AMP + diphosphate + H(+). Its function is as follows. Catalyzes the attachment of tyrosine to tRNA(Tyr) in a two-step reaction: tyrosine is first activated by ATP to form Tyr-AMP and then transferred to the acceptor end of tRNA(Tyr). In Vibrio vulnificus (strain CMCP6), this protein is Tyrosine--tRNA ligase 2.